The sequence spans 524 residues: Translation initiation factor eIF2B subunit delta (524 aa).

Residues Met1–Leu155 are disordered. Ala2 is modified (N-acetylalanine). 2 stretches are compositionally biased toward basic and acidic residues: residues Val8–Leu20 and Leu31–Arg40. Ser12 carries the phosphoserine modification. Over residues Lys41–Lys51 the composition is skewed to basic residues. Thr86 carries the phosphothreonine modification. The segment covering Ser96 to Glu121 has biased composition (basic and acidic residues). Polar residues predominate over residues Cys130 to Gly140. Positions Arg171–Leu180 are may bind the chemical integrated stress response (ISR) inhibitor ISRIB.

Belongs to the eIF-2B alpha/beta/delta subunits family. In terms of assembly, component of the translation initiation factor 2B (eIF2B) complex which is a heterodecamer of two sets of five different subunits: alpha, beta, gamma, delta and epsilon. Subunits alpha, beta and delta comprise a regulatory subcomplex and subunits epsilon and gamma comprise a catalytic subcomplex. Within the complex, the hexameric regulatory complex resides at the center, with the two heterodimeric catalytic subcomplexes bound on opposite sides.

It localises to the cytoplasm. Its subcellular location is the cytosol. With respect to regulation, activated by the chemical integrated stress response (ISR) inhibitor ISRIB which stimulates guanine nucleotide exchange factor activity for both phosphorylated and unphosphorylated eIF2. Its function is as follows. Acts as a component of the translation initiation factor 2B (eIF2B) complex, which catalyzes the exchange of GDP for GTP on eukaryotic initiation factor 2 (eIF2) gamma subunit. Its guanine nucleotide exchange factor activity is repressed when bound to eIF2 complex phosphorylated on the alpha subunit, thereby limiting the amount of methionyl-initiator methionine tRNA available to the ribosome and consequently global translation is repressed. The protein is Translation initiation factor eIF2B subunit delta (Eif2b4) of Mus musculus (Mouse).